The sequence spans 391 residues: Formate-dependent phosphoribosylglycinamide formyltransferase (391 aa).

N(1)-(5-phospho-beta-D-ribosyl)glycinamide contacts are provided by residues 18 to 19 (EL) and E78. ATP-binding positions include R110, K151, 156 to 161 (SSGKGQ), 191 to 194 (EEFI), and E199. The 191-residue stretch at 115–305 (ELAHEELGIR…EFELHLRAIL (191 aa)) folds into the ATP-grasp domain. Residues E264 and E276 each coordinate Mg(2+). N(1)-(5-phospho-beta-D-ribosyl)glycinamide-binding positions include D283, K353, and 360-361 (RR).

Belongs to the PurK/PurT family. Homodimer.

The enzyme catalyses N(1)-(5-phospho-beta-D-ribosyl)glycinamide + formate + ATP = N(2)-formyl-N(1)-(5-phospho-beta-D-ribosyl)glycinamide + ADP + phosphate + H(+). It functions in the pathway purine metabolism; IMP biosynthesis via de novo pathway; N(2)-formyl-N(1)-(5-phospho-D-ribosyl)glycinamide from N(1)-(5-phospho-D-ribosyl)glycinamide (formate route): step 1/1. In terms of biological role, involved in the de novo purine biosynthesis. Catalyzes the transfer of formate to 5-phospho-ribosyl-glycinamide (GAR), producing 5-phospho-ribosyl-N-formylglycinamide (FGAR). Formate is provided by PurU via hydrolysis of 10-formyl-tetrahydrofolate. In Trichormus variabilis (strain ATCC 29413 / PCC 7937) (Anabaena variabilis), this protein is Formate-dependent phosphoribosylglycinamide formyltransferase.